A 520-amino-acid polypeptide reads, in one-letter code: Bifunctional dihydrofolate reductase-thymidylate synthase (520 aa).

The DHFR domain maps to 26 to 229; sequence AFSIVVALDK…LEFEICKYVP (204 aa). V30 contributes to the substrate binding site. NADP(+) contacts are provided by residues A32 and 38–44; that span reads GIGDGES. D52 contributes to the substrate binding site. NADP(+)-binding positions include 81-83, 102-105, and 157-164; these read RKT, LSSK, and GGAQVYAD. Residues Y162 and T180 each coordinate substrate. Residues 234–520 are thymidylate synthase; that stretch reads ERQYLELIDR…HPPIKMEMAV (287 aa). Residue R254 participates in dUMP binding. C400 is an active-site residue. DUMP-binding positions include H401, 421–425, N433, and 463–465; these read QRSCD and HVY.

The protein in the N-terminal section; belongs to the dihydrofolate reductase family. It in the C-terminal section; belongs to the thymidylate synthase family.

It catalyses the reaction (6S)-5,6,7,8-tetrahydrofolate + NADP(+) = 7,8-dihydrofolate + NADPH + H(+). The enzyme catalyses dUMP + (6R)-5,10-methylene-5,6,7,8-tetrahydrofolate = 7,8-dihydrofolate + dTMP. It functions in the pathway cofactor biosynthesis; tetrahydrofolate biosynthesis; 5,6,7,8-tetrahydrofolate from 7,8-dihydrofolate: step 1/1. Functionally, bifunctional enzyme. Involved in de novo dTMP biosynthesis. Key enzyme in folate metabolism. Catalyzes an essential reaction for de novo glycine and purine synthesis, DNA precursor synthesis, and for the conversion of dUMP to dTMP. This is Bifunctional dihydrofolate reductase-thymidylate synthase from Leishmania amazonensis.